Consider the following 484-residue polypeptide: Acetyl-coenzyme A carboxylase carboxyl transferase subunit beta, chloroplastic (484 aa).

The region spanning 223–484 is the CoA carboxyltransferase N-terminal domain; that stretch reads LWIQCDNCYG…LHAFFPLNKN (262 aa). Zn(2+)-binding residues include Cys-227, Cys-230, Cys-243, and Cys-246. The C4-type zinc finger occupies 227–246; that stretch reads CDNCYGLMYKKVKMNVCEQC.

Belongs to the AccD/PCCB family. In terms of assembly, acetyl-CoA carboxylase is a heterohexamer composed of biotin carboxyl carrier protein, biotin carboxylase and 2 subunits each of ACCase subunit alpha and ACCase plastid-coded subunit beta (accD). Requires Zn(2+) as cofactor.

It localises to the plastid. It is found in the chloroplast stroma. The enzyme catalyses N(6)-carboxybiotinyl-L-lysyl-[protein] + acetyl-CoA = N(6)-biotinyl-L-lysyl-[protein] + malonyl-CoA. It participates in lipid metabolism; malonyl-CoA biosynthesis; malonyl-CoA from acetyl-CoA: step 1/1. Its function is as follows. Component of the acetyl coenzyme A carboxylase (ACC) complex. Biotin carboxylase (BC) catalyzes the carboxylation of biotin on its carrier protein (BCCP) and then the CO(2) group is transferred by the transcarboxylase to acetyl-CoA to form malonyl-CoA. The protein is Acetyl-coenzyme A carboxylase carboxyl transferase subunit beta, chloroplastic of Crucihimalaya wallichii (Rock-cress).